The following is a 368-amino-acid chain: GLABROUS1 enhancer-binding protein-like (368 aa).

Residues 1–123 (MAPKKAEEVV…TSDTEHVKKP (123 aa)) form a disordered region. Residues 17–31 (SEEEESGSSGEESES) show a composition bias toward acidic residues. The span at 35–47 (VPKKVESSQKPES) shows a compositional bias: basic and acidic residues. A compositionally biased stretch (polar residues) spans 84-97 (TSGSAATVPESSTA). The segment covering 100-123 (PLKEAAPEAIKKQKTSDTEHVKKP) has biased composition (basic and acidic residues).

This sequence belongs to the GeBP family. Mono-, di- and oligomers. Associated with the Mediator complex. Interacts with MED6. Interacts with MED10A, MED28 and MED32. Interacts with DEK3.

It localises to the nucleus. Its function is as follows. Transcription factor that binds promoters containing the CryR2 element, 5'-ACATAWCT-3'. The DNA-binding activity is decreased upon direct physical interaction with the mediator subunits and is modulated by redox conditions. The oxidized protein is the preferential binding form. This Arabidopsis thaliana (Mouse-ear cress) protein is GLABROUS1 enhancer-binding protein-like.